Here is a 1201-residue protein sequence, read N- to C-terminus: Potassium/sodium hyperpolarization-activated cyclic nucleotide-gated channel 4 (1201 aa).

Over 1 to 263 the chain is Cytoplasmic; the sequence is MDKLPPSMRK…IIHPYSDFRF (263 aa). The tract at residues 24-183 is disordered; the sequence is WIMDEEEDGE…PASASCEQPS (160 aa). The segment covering 26–36 has biased composition (acidic residues); the sequence is MDEEEDGEEEG. Residues 105–118 show a composition bias toward gly residues; sequence SRGGGSGGAGGGSS. Basic and acidic residues predominate over residues 121-132; sequence HLHDSAEERRLI. Phosphoserine is present on Ser139. A compositionally biased stretch (pro residues) spans 164–174; sequence ASPPPQQPPQP. Residues 209 to 260 are involved in subunit assembly; that stretch reads GQSGFMQRQFGAMLQPGVNKFSLRMFGSQKAVEREQERVKSAGFWIIHPYSD. Residues 264 to 286 traverse the membrane as a helical segment; it reads YWDLTMLLLMVGNLIIIPVGITF. Residues 287–293 lie on the Extracellular side of the membrane; it reads FKDENTT. Residues 294–314 traverse the membrane as a helical segment; the sequence is PWIVFNVVSDTFFLIDLVLNF. The Cytoplasmic portion of the chain corresponds to 315 to 336; that stretch reads RTGIVVEDNTEIILDPQRIKMK. Residues 337–359 traverse the membrane as a helical segment; it reads YLKSWFVVDFISSIPVDYIFLIV. The Extracellular segment spans residues 360–378; sequence ETRIDSEVYKTARALRIVR. The helical; Voltage-sensor transmembrane segment at 379–399 threads the bilayer; that stretch reads FTKILSLLRLLRLSRLIRYIH. The Cytoplasmic segment spans residues 400–413; it reads QWEEIFHMTYDLAS. A helical transmembrane segment spans residues 414 to 436; the sequence is AVVRIVNLIGMMLLLCHWDGCLQ. The Extracellular segment spans residues 437-464; sequence FLVPMLQDFPHDCWVSINGMVNNSWGKQ. Asn458 carries N-linked (GlcNAc...) asparagine glycosylation. The pore-forming intramembrane region spans 465–486; it reads YSYALFKAMSHMLCIGYGRQAP. The Extracellular segment spans residues 487–491; sequence VGMSD. The helical transmembrane segment at 492 to 517 threads the bilayer; the sequence is VWLTMLSMIVGATCYAMFIGHATALI. Topologically, residues 518-1201 are cytoplasmic; the sequence is QSLDSSRRQY…PVRSKLPSNL (684 aa). Residues Tyr559, Lys562, Phe564, and Glu566 each coordinate 3',5'-cyclic GMP. 7 residues coordinate 3',5'-cyclic AMP: Gly659, Glu660, Cys662, Arg669, Thr670, Val673, and Arg710. Disordered regions lie at residues 804-902 and 914-1201; these read AIFR…TAAA and ALGG…PSNL. Composition is skewed to low complexity over residues 831–856 and 866–880; these read SLIPSALGSASPASSPSQVDTPSSSS and SAPPGLSPLLPSSSS. The segment covering 881–894 has biased composition (pro residues); that stretch reads SPPPGACGSPPAPT. Low complexity-rich tracts occupy residues 915 to 939 and 967 to 995; these read LGGSLSSSDSPLLTPLQPGARSPQA and RSPSSSPGQLGQPPGELSLGLAAGPSSTP. Positions 1029 to 1042 are enriched in pro residues; the sequence is GHSPGPPRTFPSAP. The span at 1045–1056 shows a compositional bias: low complexity; it reads ASGSHGSLLLPP. A phosphoserine mark is found at Ser1105 and Ser1108. Positions 1122-1134 are enriched in gly residues; it reads AGGGSGSSGGLGP.

It belongs to the potassium channel HCN family. In terms of assembly, homotetramer. The potassium channel is composed of a homo- or heterotetrameric complex of pore-forming subunits. Interacts with PEX5L with a 4:4 HCN4:PEX5L stoichiometry; reduces the effects of cAMP on the voltage-dependence and rate of activation. Interacts with IRAG1; regulates HCN4 channel activity. Interacts with IRAG2; regulates HCN4 channel activity. S-palmitoylated. Detected in a subset of elongated cells in taste buds.

It localises to the cell membrane. It carries out the reaction K(+)(in) = K(+)(out). The catalysed reaction is Na(+)(in) = Na(+)(out). Its activity is regulated as follows. Activated by cAMP, and to a lesser extent by cGMP and cCMP. cAMP binding causes a conformation change that leads to the assembly of an active tetramer and channel opening. Binding of cAMP removes a tonic inhibition conferred by cyclic nucleotide-binding domain (CNBD) on channel opening. Cyclic dinucleotides can modulate HCN4 channel; cyclic dinucleotides acting as potent antagonists of cAMP. Inhibited by extracellular Cs(+) ions. Auxiliary subunits can also regulate HCN4 channel. IRAG1 causes a gain-of-function by shifting HCN4 activation to more depolarized membrane potentials in the absence of cAMP. In contrast, IRAG2 causes a loss-of-function by inhibiting cAMP-dependent potentiation of HCN4 activation. Its function is as follows. Hyperpolarization-activated ion channel that are permeable to Na(+) and K(+) ions with very slow activation and inactivation. Exhibits higher selectivity for K(+) over Na(+) ions. Contributes to the native pacemaker currents in heart (If) that regulate the rhythm of heart beat. Contributes to the native pacemaker currents in neurons (Ih). May mediate responses to sour stimuli. The sequence is that of Potassium/sodium hyperpolarization-activated cyclic nucleotide-gated channel 4 (Hcn4) from Mus musculus (Mouse).